We begin with the raw amino-acid sequence, 191 residues long: Dephospho-CoA kinase (191 aa).

A DPCK domain is found at 3 to 191 (AIGITGSYAS…KLIKDLECRV (189 aa)). Position 11 to 16 (11 to 16 (ASGKTF)) interacts with ATP.

The protein belongs to the CoaE family.

It is found in the cytoplasm. It catalyses the reaction 3'-dephospho-CoA + ATP = ADP + CoA + H(+). Its pathway is cofactor biosynthesis; coenzyme A biosynthesis; CoA from (R)-pantothenate: step 5/5. In terms of biological role, catalyzes the phosphorylation of the 3'-hydroxyl group of dephosphocoenzyme A to form coenzyme A. The chain is Dephospho-CoA kinase from Rickettsia prowazekii (strain Madrid E).